The chain runs to 655 residues: Mannosyl-oligosaccharide 1,2-alpha-mannosidase IA (655 aa).

Residues 1 to 43 lie on the Cytoplasmic side of the membrane; it reads MPVGGLLPLFSSPGGGGLGSGLGGGLGGGRKGSGPAAFRLTEK. The helical; Signal-anchor for type II membrane protein transmembrane segment at 44–64 threads the bilayer; that stretch reads FVLLLVFSAFITLCFGAIFFL. Residues 65-655 are Lumenal-facing; that stretch reads PDSSKLLSGV…QKKEIDGKEK (591 aa). A disulfide bridge links C478 with C510. N515 carries N-linked (GlcNAc...) asparagine glycosylation. The active-site Proton donor is E524. T635 is a binding site for Ca(2+).

This sequence belongs to the glycosyl hydrolase 47 family. Requires Ca(2+) as cofactor. In terms of processing, N-linked glycan at Asn-515 consists of Man(6)-GlcNAc(2).

The protein resides in the golgi apparatus membrane. It carries out the reaction N(4)-(alpha-D-Man-(1-&gt;2)-alpha-D-Man-(1-&gt;2)-alpha-D-Man-(1-&gt;3)-[alpha-D-Man-(1-&gt;2)-alpha-D-Man-(1-&gt;3)-[alpha-D-Man-(1-&gt;2)-alpha-D-Man-(1-&gt;6)]-alpha-D-Man-(1-&gt;6)]-beta-D-Man-(1-&gt;4)-beta-D-GlcNAc-(1-&gt;4)-beta-D-GlcNAc)-L-asparaginyl-[protein] (N-glucan mannose isomer 9A1,2,3B1,2,3) + 4 H2O = N(4)-(alpha-D-Man-(1-&gt;3)-[alpha-D-Man-(1-&gt;3)-[alpha-D-Man-(1-&gt;6)]-alpha-D-Man-(1-&gt;6)]-beta-D-Man-(1-&gt;4)-beta-D-GlcNAc-(1-&gt;4)-beta-D-GlcNAc)-L-asparaginyl-[protein] (N-glucan mannose isomer 5A1,2) + 4 beta-D-mannose. The enzyme catalyses N(4)-(alpha-D-Man-(1-&gt;2)-alpha-D-Man-(1-&gt;2)-alpha-D-Man-(1-&gt;3)-[alpha-D-Man-(1-&gt;3)-[alpha-D-Man-(1-&gt;2)-alpha-D-Man-(1-&gt;6)]-alpha-D-Man-(1-&gt;6)]-beta-D-Man-(1-&gt;4)-beta-D-GlcNAc-(1-&gt;4)-beta-D-GlcNAc)-L-asparaginyl-[protein] (N-glucan mannose isomer 8A1,2,3B1,3) + 3 H2O = N(4)-(alpha-D-Man-(1-&gt;3)-[alpha-D-Man-(1-&gt;3)-[alpha-D-Man-(1-&gt;6)]-alpha-D-Man-(1-&gt;6)]-beta-D-Man-(1-&gt;4)-beta-D-GlcNAc-(1-&gt;4)-beta-D-GlcNAc)-L-asparaginyl-[protein] (N-glucan mannose isomer 5A1,2) + 3 beta-D-mannose. It functions in the pathway protein modification; protein glycosylation. Its activity is regulated as follows. Inhibited by both 1-deoxymannojirimycin and kifunensine. Functionally, involved in the maturation of Asn-linked oligosaccharides. Progressively trim alpha-1,2-linked mannose residues from Man(9)GlcNAc(2) to produce Man(5)GlcNAc(2). This Mus musculus (Mouse) protein is Mannosyl-oligosaccharide 1,2-alpha-mannosidase IA (Man1a1).